The primary structure comprises 777 residues: Serine/threonine-protein kinase PLK4 (777 aa).

Residues 14–268 enclose the Protein kinase domain; that stretch reads YEVQHLLGKG…LEQVLRHPFL (255 aa). Residues 20–28 and Lys43 each bind ATP; that span reads LGKGGFASV. Asp139 (proton acceptor) is an active-site residue. Positions 371–381 are enriched in polar residues; it reads TNNLAPFTSDS. The tract at residues 371 to 390 is disordered; sequence TNNLAPFTSDSDMIPSPVGE. The Cryptic POLO box 1 (CPB1) domain maps to 390 to 507; sequence EKRLLMPPLE…ARFVGLVKSK (118 aa). In terms of domain architecture, Cryptic POLO box 2 (CPB2) spans 508-611; the sequence is TPKITFFSSL…GRRPAADMHA (104 aa). Residues 669–748 form the POLO box domain; that stretch reads PIKRITVPEI…MPQLQMKLKC (80 aa).

It belongs to the protein kinase superfamily. Ser/Thr protein kinase family. CDC5/Polo subfamily. Homodimer. Post-translationally, ubiquitinated by the SCF(Slimb) ubiquitin ligase complex; leading to its degradation by the proteasome during interphase and regulating centriole number and ensuring the block to centriole reduplication.

It is found in the cytoplasm. The protein localises to the cytoskeleton. The protein resides in the microtubule organizing center. Its subcellular location is the centrosome. It localises to the centriole. It carries out the reaction L-seryl-[protein] + ATP = O-phospho-L-seryl-[protein] + ADP + H(+). The enzyme catalyses L-threonyl-[protein] + ATP = O-phospho-L-threonyl-[protein] + ADP + H(+). Its function is as follows. Serine/threonine-protein kinase that plays a central role in centriole duplication. Able to trigger procentriole formation on the surface of the mother centriole cylinder, using mother centriole as a platform, leading to the recruitment of centriole biogenesis proteins such as sas-6. When overexpressed, it is able to induce centrosome amplification through the simultaneous generation of multiple procentrioles adjoining each parental centriole during S phase. Centrosome amplification following overexpression can initiate tumorigenesis, highlighting the importance of centrosome regulation in cancers. In Drosophila persimilis (Fruit fly), this protein is Serine/threonine-protein kinase PLK4 (SAK).